A 280-amino-acid polypeptide reads, in one-letter code: Acyl-[acyl-carrier-protein]--UDP-N-acetylglucosamine O-acyltransferase (280 aa).

Belongs to the transferase hexapeptide repeat family. LpxA subfamily. Homotrimer.

The protein resides in the cytoplasm. The enzyme catalyses a (3R)-hydroxyacyl-[ACP] + UDP-N-acetyl-alpha-D-glucosamine = a UDP-3-O-[(3R)-3-hydroxyacyl]-N-acetyl-alpha-D-glucosamine + holo-[ACP]. Its pathway is glycolipid biosynthesis; lipid IV(A) biosynthesis; lipid IV(A) from (3R)-3-hydroxytetradecanoyl-[acyl-carrier-protein] and UDP-N-acetyl-alpha-D-glucosamine: step 1/6. Its function is as follows. Involved in the biosynthesis of lipid A, a phosphorylated glycolipid that anchors the lipopolysaccharide to the outer membrane of the cell. In Chlamydia muridarum (strain MoPn / Nigg), this protein is Acyl-[acyl-carrier-protein]--UDP-N-acetylglucosamine O-acyltransferase.